The sequence spans 932 residues: Alanine--tRNA ligase (932 aa).

Zn(2+)-binding residues include histidine 623, histidine 627, cysteine 726, and histidine 730. The tract at residues 893–916 is disordered; it reads RVGGGGGGPPDFAQGGGPDVDSLD. Gly residues predominate over residues 894–910; the sequence is VGGGGGGPPDFAQGGGP.

It belongs to the class-II aminoacyl-tRNA synthetase family. Zn(2+) is required as a cofactor.

It localises to the cytoplasm. The catalysed reaction is tRNA(Ala) + L-alanine + ATP = L-alanyl-tRNA(Ala) + AMP + diphosphate. Functionally, catalyzes the attachment of alanine to tRNA(Ala) in a two-step reaction: alanine is first activated by ATP to form Ala-AMP and then transferred to the acceptor end of tRNA(Ala). Also edits incorrectly charged Ser-tRNA(Ala) and Gly-tRNA(Ala) via its editing domain. The sequence is that of Alanine--tRNA ligase from Natronomonas pharaonis (strain ATCC 35678 / DSM 2160 / CIP 103997 / JCM 8858 / NBRC 14720 / NCIMB 2260 / Gabara) (Halobacterium pharaonis).